We begin with the raw amino-acid sequence, 270 residues long: NAD kinase (270 aa).

The active-site Proton acceptor is Asp-63. NAD(+)-binding positions include 63–64 (DG), 131–132 (NE), Lys-142, Arg-159, Asp-161, 172–177 (TAYAMS), Ala-196, and Gln-230.

Belongs to the NAD kinase family. It depends on a divalent metal cation as a cofactor.

It localises to the cytoplasm. It catalyses the reaction NAD(+) + ATP = ADP + NADP(+) + H(+). In terms of biological role, involved in the regulation of the intracellular balance of NAD and NADP, and is a key enzyme in the biosynthesis of NADP. Catalyzes specifically the phosphorylation on 2'-hydroxyl of the adenosine moiety of NAD to yield NADP. This is NAD kinase from Methanoculleus marisnigri (strain ATCC 35101 / DSM 1498 / JR1).